Consider the following 564-residue polypeptide: Mercuric reductase (564 aa).

Residues 1–65 enclose the HMA domain; the sequence is MSTLKITGMT…AVAGLGYRAT (65 aa). Residues Cys-11 and Cys-14 each contribute to the a metal cation site. Residues Ala-109, Gly-129, and Thr-134 each coordinate FAD. The cysteines at positions 135 and 140 are disulfide-linked. 4 residues coordinate FAD: Lys-144, Ala-210, Asp-406, and Val-414. 2 residues coordinate Hg(2+): Cys-561 and Cys-562.

It belongs to the class-I pyridine nucleotide-disulfide oxidoreductase family. Homodimer. The cofactor is FAD.

The enzyme catalyses Hg + NADP(+) + H(+) = Hg(2+) + NADPH. Its function is as follows. Resistance to Hg(2+) in bacteria appears to be governed by a specialized system which includes mercuric reductase. MerA protein is responsible for volatilizing mercury as Hg(0). The chain is Mercuric reductase (merA) from Shigella flexneri.